We begin with the raw amino-acid sequence, 89 residues long: Large ribosomal subunit protein bL31B (89 aa).

The protein belongs to the bacterial ribosomal protein bL31 family. Type B subfamily. Part of the 50S ribosomal subunit.

This is Large ribosomal subunit protein bL31B from Enterococcus faecalis (strain ATCC 700802 / V583).